The sequence spans 499 residues: Probable cytosol aminopeptidase (499 aa).

Residues Lys267 and Asp272 each contribute to the Mn(2+) site. The active site involves Lys279. Residues Asp290, Asp349, and Glu351 each coordinate Mn(2+). Arg353 is a catalytic residue.

The protein belongs to the peptidase M17 family. It depends on Mn(2+) as a cofactor.

The protein resides in the cytoplasm. It catalyses the reaction Release of an N-terminal amino acid, Xaa-|-Yaa-, in which Xaa is preferably Leu, but may be other amino acids including Pro although not Arg or Lys, and Yaa may be Pro. Amino acid amides and methyl esters are also readily hydrolyzed, but rates on arylamides are exceedingly low.. The enzyme catalyses Release of an N-terminal amino acid, preferentially leucine, but not glutamic or aspartic acids.. Functionally, presumably involved in the processing and regular turnover of intracellular proteins. Catalyzes the removal of unsubstituted N-terminal amino acids from various peptides. In Alkaliphilus oremlandii (strain OhILAs) (Clostridium oremlandii (strain OhILAs)), this protein is Probable cytosol aminopeptidase.